We begin with the raw amino-acid sequence, 83 residues long: MQTSMFLTLTGLVLLFVVCYASESEEKEFPKELLSSIFAADSDFKEEERGCFGYKCDYYKGCCSGYVCSPTWKWCVRPGPGRR.

The signal sequence occupies residues 1-21 (MQTSMFLTLTGLVLLFVVCYA). Residues 22–49 (SESEEKEFPKELLSSIFAADSDFKEEER) constitute a propeptide that is removed on maturation. 3 cysteine pairs are disulfide-bonded: Cys-51–Cys-63, Cys-56–Cys-68, and Cys-62–Cys-75.

It belongs to the neurotoxin 10 (Hwtx-1) family. 51 (Hntx-8) subfamily. Hntx-8 sub-subfamily. In terms of tissue distribution, expressed by the venom gland.

Its subcellular location is the secreted. Agglutinates erythrocytes. In Cyriopagopus schmidti (Chinese bird spider), this protein is U5-theraphotoxin-Hs1b 2.